Reading from the N-terminus, the 71-residue chain is DNA-directed RNA polymerase subunit omega (71 aa).

This sequence belongs to the RNA polymerase subunit omega family. As to quaternary structure, the RNAP catalytic core consists of 2 alpha, 1 beta, 1 beta' and 1 omega subunit. When a sigma factor is associated with the core the holoenzyme is formed, which can initiate transcription.

It catalyses the reaction RNA(n) + a ribonucleoside 5'-triphosphate = RNA(n+1) + diphosphate. Its function is as follows. Promotes RNA polymerase assembly. Latches the N- and C-terminal regions of the beta' subunit thereby facilitating its interaction with the beta and alpha subunits. The sequence is that of DNA-directed RNA polymerase subunit omega from Campylobacter curvus (strain 525.92).